Reading from the N-terminus, the 246-residue chain is UDP-N-acetyl-D-mannosaminuronic acid transferase (246 aa).

Belongs to the glycosyltransferase 26 family.

The catalysed reaction is UDP-N-acetyl-alpha-D-mannosaminouronate + N-acetyl-alpha-D-glucosaminyl-di-trans,octa-cis-undecaprenyl diphosphate = beta-D-ManNAcA-(1-&gt;4)-alpha-D-GlcNAc-di-trans,octa-cis-undecaprenyl diphosphate + UDP + H(+). It participates in bacterial outer membrane biogenesis; enterobacterial common antigen biosynthesis. Functionally, catalyzes the synthesis of Und-PP-GlcNAc-ManNAcA (Lipid II), the second lipid-linked intermediate involved in enterobacterial common antigen (ECA) synthesis. In Yersinia pestis bv. Antiqua (strain Antiqua), this protein is UDP-N-acetyl-D-mannosaminuronic acid transferase.